The primary structure comprises 228 residues: Small ribosomal subunit protein uS3 (228 aa).

Residues 39–107 (VREYLQDKLK…PVHINIEEIR (69 aa)) enclose the KH type-2 domain.

Belongs to the universal ribosomal protein uS3 family. Part of the 30S ribosomal subunit. Forms a tight complex with proteins S10 and S14.

Its function is as follows. Binds the lower part of the 30S subunit head. Binds mRNA in the 70S ribosome, positioning it for translation. The chain is Small ribosomal subunit protein uS3 from Stutzerimonas stutzeri (strain A1501) (Pseudomonas stutzeri).